A 406-amino-acid polypeptide reads, in one-letter code: Tyrosine-protein phosphatase non-receptor type 2 (406 aa).

Residues Ile-5–Gly-275 enclose the Tyrosine-protein phosphatase domain. A Phosphotyrosine modification is found at Tyr-22. Ser-52 bears the Phosphoserine mark. A Phosphotyrosine modification is found at Tyr-68. Substrate-binding positions include Asp-182, Cys-216 to Arg-222, and Gln-260. Catalysis depends on Cys-216, which acts as the Phosphocysteine intermediate. Residue Cys-216 is modified to S-nitrosocysteine. Phosphoserine occurs at positions 293, 298, 304, 320, and 339. The interval Glu-341–His-406 is endoplasmic reticulum location. The interval Glu-371 to His-406 is mediates interaction with STX17.

It belongs to the protein-tyrosine phosphatase family. Non-receptor class 1 subfamily. In terms of assembly, interacts with RMDN3. Isoform 1 interacts with TMED9. Isoform 1 interacts with STX17; dephosphorylates STX17. Interacts with ITGA1 (via cytoplasmic domain); activates the phosphatase activity towards EGFR. Interacts with TRAF2; probably involved in tumor necrosis factor-mediated signaling. Interacts with MET. Interacts with FAM220A and STAT3; interaction with FAM220A promotes interaction of PTPN2 with transcriptional activator STAT3, leading to dephosphorylation of STAT3 by PTPN2 and negative regulation of STAT3 transcriptional activator activity. Specifically phosphorylated in a cell cycle-dependent manner by cyclin-dependent kinases CDK1 and CDK2. Probably activated through phosphorylation by PKR. In terms of tissue distribution, ubiquitously expressed. The highest expression levels were found in ovary, testis, thymus and kidney.

It localises to the endoplasmic reticulum. The protein localises to the endoplasmic reticulum-Golgi intermediate compartment. The protein resides in the nucleus. Its subcellular location is the cytoplasm. It is found in the cell membrane. The enzyme catalyses O-phospho-L-tyrosyl-[protein] + H2O = L-tyrosyl-[protein] + phosphate. Functionally, non-receptor type tyrosine-specific phosphatase that dephosphorylates receptor protein tyrosine kinases including INSR, EGFR, CSF1R, PDGFR. Also dephosphorylates non-receptor protein tyrosine kinases like JAK1, JAK2, JAK3, Src family kinases, STAT1, STAT3 and STAT6 either in the nucleus or the cytoplasm. Negatively regulates numerous signaling pathways and biological processes like hematopoiesis, inflammatory response, cell proliferation and differentiation, and glucose homeostasis. Plays a multifaceted and important role in the development of the immune system. Functions in T-cell receptor signaling through dephosphorylation of FYN and LCK to control T-cells differentiation and activation. Dephosphorylates CSF1R, negatively regulating its downstream signaling and macrophage differentiation. Negatively regulates cytokine (IL2/interleukin-2 and interferon)-mediated signaling through dephosphorylation of the cytoplasmic kinases JAK1, JAK3 and their substrate STAT1, that propagate signaling downstream of the cytokine receptors. Also regulates the IL6/interleukin-6 and IL4/interleukin-4 cytokine signaling through dephosphorylation of STAT3 and STAT6 respectively. In addition to the immune system, it is involved in anchorage-dependent, negative regulation of EGF-stimulated cell growth. Activated by the integrin ITGA1/ITGB1, it dephosphorylates EGFR and negatively regulates EGF signaling. Dephosphorylates PDGFRB and negatively regulates platelet-derived growth factor receptor-beta signaling pathway and therefore cell proliferation. Negatively regulates tumor necrosis factor-mediated signaling downstream via MAPK through SRC dephosphorylation. May also regulate the hepatocyte growth factor receptor signaling pathway through dephosphorylation of the hepatocyte growth factor receptor MET. Also plays an important role in glucose homeostasis. For instance, negatively regulates the insulin receptor signaling pathway through the dephosphorylation of INSR and control gluconeogenesis and liver glucose production through negative regulation of the IL6 signaling pathways. May also bind DNA. This is Tyrosine-protein phosphatase non-receptor type 2 (Ptpn2) from Mus musculus (Mouse).